The following is a 224-amino-acid chain: Germin-like protein 8-9 (224 aa).

A signal peptide spans 1-22 (MASPSFCLFAALLALVSWQAIA). The cysteines at positions 32 and 47 are disulfide-linked. The 151-residue stretch at 62-212 (AMLDTPRKTN…AFQVGKGTID (151 aa)) folds into the Cupin type-1 domain. N-linked (GlcNAc...) asparagine glycosylation is present at Asn-76. Residues His-109, His-111, and Glu-116 each contribute to the Mn(2+) site. N-linked (GlcNAc...) asparagine glycosylation is present at Asn-135. His-157 contacts Mn(2+).

Belongs to the germin family. In terms of assembly, oligomer (believed to be a pentamer but probably hexamer).

It is found in the secreted. The protein localises to the extracellular space. It localises to the apoplast. Its function is as follows. Plays a role in broad-spectrum disease resistance. Probably has no oxalate oxidase activity even if the active site is conserved. This chain is Germin-like protein 8-9, found in Oryza sativa subsp. japonica (Rice).